A 93-amino-acid polypeptide reads, in one-letter code: Small ribosomal subunit protein uS17 (93 aa).

The protein belongs to the universal ribosomal protein uS17 family. In terms of assembly, part of the 30S ribosomal subunit.

One of the primary rRNA binding proteins, it binds specifically to the 5'-end of 16S ribosomal RNA. The polypeptide is Small ribosomal subunit protein uS17 (Bordetella avium (strain 197N)).